The sequence spans 105 residues: Large ribosomal subunit protein uL24 (105 aa).

This sequence belongs to the universal ribosomal protein uL24 family. As to quaternary structure, part of the 50S ribosomal subunit.

In terms of biological role, one of two assembly initiator proteins, it binds directly to the 5'-end of the 23S rRNA, where it nucleates assembly of the 50S subunit. Functionally, one of the proteins that surrounds the polypeptide exit tunnel on the outside of the subunit. This is Large ribosomal subunit protein uL24 from Vibrio vulnificus (strain YJ016).